Consider the following 399-residue polypeptide: Beta sliding clamp (399 aa).

It belongs to the beta sliding clamp family. Forms a ring-shaped head-to-tail homodimer around DNA which binds and tethers DNA polymerases and other proteins to the DNA. The DNA replisome complex has a single clamp-loading complex (3 tau and 1 each of delta, delta', psi and chi subunits) which binds 3 Pol III cores (1 core on the leading strand and 2 on the lagging strand) each with a beta sliding clamp dimer. Additional proteins in the replisome are other copies of gamma, psi and chi, Ssb, DNA helicase and RNA primase.

The protein resides in the cytoplasm. Confers DNA tethering and processivity to DNA polymerases and other proteins. Acts as a clamp, forming a ring around DNA (a reaction catalyzed by the clamp-loading complex) which diffuses in an ATP-independent manner freely and bidirectionally along dsDNA. Initially characterized for its ability to contact the catalytic subunit of DNA polymerase III (Pol III), a complex, multichain enzyme responsible for most of the replicative synthesis in bacteria; Pol III exhibits 3'-5' exonuclease proofreading activity. The beta chain is required for initiation of replication as well as for processivity of DNA replication. This chain is Beta sliding clamp (dnaN), found in Mycolicibacterium paratuberculosis (strain ATCC BAA-968 / K-10) (Mycobacterium paratuberculosis).